We begin with the raw amino-acid sequence, 29 residues long: U20-ctenitoxin-Co1a (29 aa).

Disulfide bonds link cysteine 3–cysteine 16 and cysteine 10–cysteine 21.

As to expression, expressed by the venom gland.

It is found in the secreted. The chain is U20-ctenitoxin-Co1a from Ctenus ornatus (Brazilian spider).